The sequence spans 153 residues: Ubiquitin/ISG15-conjugating enzyme E2 L6 (153 aa).

In terms of domain architecture, UBC core spans 2–149 (TASKRVAKEL…AEEFTLQYGV (148 aa)). Residue Cys-86 is the Glycyl thioester intermediate of the active site.

This sequence belongs to the ubiquitin-conjugating enzyme family. In terms of assembly, interacts with RNF19A, RNF19B and RNF144B. Interacts with FLT3 (tyrosine phosphorylated). ISGylated.

It carries out the reaction S-ubiquitinyl-[E1 ubiquitin-activating enzyme]-L-cysteine + [E2 ubiquitin-conjugating enzyme]-L-cysteine = [E1 ubiquitin-activating enzyme]-L-cysteine + S-ubiquitinyl-[E2 ubiquitin-conjugating enzyme]-L-cysteine.. Its pathway is protein modification; protein ubiquitination. Functionally, catalyzes the covalent attachment of ubiquitin to other proteins. Functions in the E6/E6-AP-induced ubiquitination of p53/TP53. Promotes ubiquitination and subsequent proteasomal degradation of FLT3. This chain is Ubiquitin/ISG15-conjugating enzyme E2 L6 (Ube2l6), found in Rattus norvegicus (Rat).